Reading from the N-terminus, the 154-residue chain is Large ribosomal subunit protein uL13 (154 aa).

It belongs to the universal ribosomal protein uL13 family. As to quaternary structure, part of the 50S ribosomal subunit.

In terms of biological role, this protein is one of the early assembly proteins of the 50S ribosomal subunit, although it is not seen to bind rRNA by itself. It is important during the early stages of 50S assembly. The sequence is that of Large ribosomal subunit protein uL13 from Mesorhizobium japonicum (strain LMG 29417 / CECT 9101 / MAFF 303099) (Mesorhizobium loti (strain MAFF 303099)).